Reading from the N-terminus, the 1583-residue chain is Mediator of RNA polymerase II transcription subunit 12 (1583 aa).

Disordered stretches follow at residues 1-117 (MIPH…SLSW) and 1481-1525 (SNIP…SGIP). A compositionally biased stretch (basic and acidic residues) spans 66–79 (DTSEREPPSKRLRL). Low complexity-rich tracts occupy residues 102-114 (TPST…KPSS) and 1490-1514 (PSPA…GSST).

The protein belongs to the Mediator complex subunit 12 family. Component of the srb8-11 complex, which itself associates with the Mediator complex.

It localises to the nucleus. Its function is as follows. Component of the srb8-11 complex. The srb8-11 complex is a regulatory module of the Mediator complex which is itself involved in regulation of basal and activated RNA polymerase II-dependent transcription. The srb8-11 complex may be involved in the transcriptional repression of a subset of genes regulated by Mediator. It may inhibit the association of the Mediator complex with RNA polymerase II to form the holoenzyme complex. The sequence is that of Mediator of RNA polymerase II transcription subunit 12 (srb8) from Aspergillus terreus (strain NIH 2624 / FGSC A1156).